We begin with the raw amino-acid sequence, 224 residues long: Claudin-19 (224 aa).

Over 1–7 (MANSGLQ) the chain is Cytoplasmic. A helical transmembrane segment spans residues 8-28 (LLGYFLALGGWVGIIASTALP). The Extracellular segment spans residues 29–81 (QWKQSSYAGDAIITAVGLYEGLWMSCASQSTGQVQCKLYDSLLALDGHIQSAR). A disulfide bridge links Cys-54 with Cys-64. The helical transmembrane segment at 82 to 102 (ALMVVAVLLGFVAMVLSVVGM) threads the bilayer. Topologically, residues 103–117 (KCTRVGDSNPIAKGR) are cytoplasmic. Residues 118–138 (VAIAGGALFILAGLCTLTAVS) form a helical membrane-spanning segment. Over 139–160 (WYATLVTQEFFNPSTPVNARYE) the chain is Extracellular. The helical transmembrane segment at 161–181 (FGPALFVGWASAGLAVLGGSF) threads the bilayer. The Cytoplasmic portion of the chain corresponds to 182-224 (LCCTCPEPERPNSSPQPYRPGPSAAAREPVVKLPASAKGPLGV). Positions 191–224 (RPNSSPQPYRPGPSAAAREPVVKLPASAKGPLGV) are disordered.

This sequence belongs to the claudin family. As to quaternary structure, can form homo- and heteropolymeric tight junction strands. Interacts with other claudins including CLDN3, CLDN10, CLDN16 and CLDN18 with highest affinity for CLDN16. Interacts (via PDZ-binding motif TRV) with TJP1 (via PDZ domain).

The protein resides in the cell junction. It is found in the tight junction. It localises to the cell membrane. It carries out the reaction Mg(2+)(in) = Mg(2+)(out). The catalysed reaction is Ca(2+)(in) = Ca(2+)(out). The enzyme catalyses Na(+)(in) = Na(+)(out). It catalyses the reaction K(+)(in) = K(+)(out). It carries out the reaction Rb(+)(in) = Rb(+)(out). The catalysed reaction is Cs(+)(in) = Cs(+)(out). The enzyme catalyses Li(+)(in) = Li(+)(out). In terms of biological role, forms paracellular channels: coassembles with CLDN16 into tight junction strands with cation-selective channels through the strands, conveying epithelial permeability in a process known as paracellular tight junction permeability. Involved in the maintenance of ion gradients along the nephron. In the thick ascending limb (TAL) of Henle's loop, facilitates sodium paracellular permeability from the interstitial compartment to the lumen, contributing to the lumen-positive transepithelial potential that drives paracellular magnesium and calcium reabsorption. Forms paracellular barriers on its own. In the peripheral nervous system, represents a major constituent of the tight junctions in Schwann cells and contributes to electrical sealing. During retinal neurogenesis, may regulate the barrier properties of tight junctions in retinal pigment epithelium, required for proper retinal tissue differentiation and vision. The sequence is that of Claudin-19 from Homo sapiens (Human).